Consider the following 736-residue polypeptide: MYSRRELEDLEYRYYSEMKDGTRKVKISESLFRCPFCYIDRKRDYQFDDLLRHASGIGGSSRTKDGRDKARHLALERYMRKYLRPRERPRPSPTSDVSSLPKEEFTGKWKSTLSTTEEGEFITTENSSSPHIVKAEPKFVSGDDSGRSGEERLKFSDKPDPFFSNEDKSYPAKRPCLVSGAKEGDEPVQRIGLSHGASFAPTYPQKLVSLGAGNGDQMYVHPWKGILANMKRTFNEKTRKYAGESGSKIREDLIKKGFNPHKVTPLWNGRLGFTGFAIVDFGKEWEGFRNATMFDKHFEVSQCGKRDHDLTRDPGDKLYGWVAKQDDYYSRTAIGDHLRKQGDLKSVSGKEAEDQRKTFTLVSNLENTLVTKSDNLQQMESIYKQTSSVLEKRMKEKDEMINTHNEKMSIMQQTARDYLASIYEEHEKASQHLEAQRKEYEDRENYLDKCQAKNKTERRKLQWQKHKNLMATQEQNKADEDMMRLAEQQQREKDELRKQVRELEEKIDAEQALELEIERMRGDLQVMGHMQEGEGEDSKIKEMIEKTKEELKEKEEDWEYQESLYQTLVVKHGYTNDELQDARKALIRSMRELTTRAYIGVKRMGALDETPFKKVAKEKYPAVEADKKAEELCSLWEEHLGDSAWHPIKVVEKDGIAKEELNEEDEKLQELRKELGEEVYAAVTQALKERNEYNGSGRYIVPELWNFKQNRKASIKEGVVYLVNSWKQKKPKPKRR.

Composition is skewed to basic and acidic residues over residues 80-90 and 144-167; these read RKYLRPRERPR and DSGR…SNED. The disordered stretch occupies residues 80–167; the sequence is RKYLRPRERP…KPDPFFSNED (88 aa). Residues 360-597 are a coiled coil; the sequence is TLVSNLENTL…RSMRELTTRA (238 aa).

Its function is as follows. Acts in association with FDM3 and FDM5 for RNA-directed DNA methylation (RdDM). The polypeptide is Factor of DNA methylation 4 (Arabidopsis thaliana (Mouse-ear cress)).